We begin with the raw amino-acid sequence, 225 residues long: NAD(P)H-quinone oxidoreductase subunit K, chloroplastic (225 aa).

[4Fe-4S] cluster is bound by residues Cys-43, Cys-44, Cys-108, and Cys-139.

This sequence belongs to the complex I 20 kDa subunit family. NDH is composed of at least 16 different subunits, 5 of which are encoded in the nucleus. Requires [4Fe-4S] cluster as cofactor.

It localises to the plastid. Its subcellular location is the chloroplast thylakoid membrane. The catalysed reaction is a plastoquinone + NADH + (n+1) H(+)(in) = a plastoquinol + NAD(+) + n H(+)(out). It carries out the reaction a plastoquinone + NADPH + (n+1) H(+)(in) = a plastoquinol + NADP(+) + n H(+)(out). Its function is as follows. NDH shuttles electrons from NAD(P)H:plastoquinone, via FMN and iron-sulfur (Fe-S) centers, to quinones in the photosynthetic chain and possibly in a chloroplast respiratory chain. The immediate electron acceptor for the enzyme in this species is believed to be plastoquinone. Couples the redox reaction to proton translocation, and thus conserves the redox energy in a proton gradient. The protein is NAD(P)H-quinone oxidoreductase subunit K, chloroplastic of Populus trichocarpa (Western balsam poplar).